A 365-amino-acid chain; its full sequence is Aminomethyltransferase (365 aa).

The protein belongs to the GcvT family. The glycine cleavage system is composed of four proteins: P, T, L and H.

It catalyses the reaction N(6)-[(R)-S(8)-aminomethyldihydrolipoyl]-L-lysyl-[protein] + (6S)-5,6,7,8-tetrahydrofolate = N(6)-[(R)-dihydrolipoyl]-L-lysyl-[protein] + (6R)-5,10-methylene-5,6,7,8-tetrahydrofolate + NH4(+). In terms of biological role, the glycine cleavage system catalyzes the degradation of glycine. This Chlorobaculum parvum (strain DSM 263 / NCIMB 8327) (Chlorobium vibrioforme subsp. thiosulfatophilum) protein is Aminomethyltransferase.